The primary structure comprises 226 residues: Large ribosomal subunit protein uL1 (226 aa).

This sequence belongs to the universal ribosomal protein uL1 family. Part of the 50S ribosomal subunit.

Binds directly to 23S rRNA. The L1 stalk is quite mobile in the ribosome, and is involved in E site tRNA release. In terms of biological role, protein L1 is also a translational repressor protein, it controls the translation of the L11 operon by binding to its mRNA. The sequence is that of Large ribosomal subunit protein uL1 from Borreliella burgdorferi (strain ATCC 35210 / DSM 4680 / CIP 102532 / B31) (Borrelia burgdorferi).